Reading from the N-terminus, the 88-residue chain is Large ribosomal subunit protein bL27 (88 aa).

A disordered region spans residues 1-21; the sequence is MAHKKGQGSTQNNRDSAGRRL.

Belongs to the bacterial ribosomal protein bL27 family.

The protein is Large ribosomal subunit protein bL27 of Helicobacter pylori (strain J99 / ATCC 700824) (Campylobacter pylori J99).